The primary structure comprises 339 residues: Protein-lysine N-methyltransferase EFM3 (339 aa).

S-adenosyl-L-methionine-binding positions include W137 and 174–176 (GAG). At T177 the chain carries Phosphothreonine. The S-adenosyl-L-methionine site is built by D199, W233, and A248.

The protein belongs to the class I-like SAM-binding methyltransferase superfamily. EEF2KMT family.

It is found in the cytoplasm. In terms of biological role, S-adenosyl-L-methionine-dependent protein-lysine N-methyltransferase that mono-, di- and trimethylates elongation factor 2 (EFT1/EFT2) at 'Lys-509'. The protein is Protein-lysine N-methyltransferase EFM3 of Saccharomyces cerevisiae (strain ATCC 204508 / S288c) (Baker's yeast).